The sequence spans 1175 residues: 1-phosphatidylinositol 4,5-bisphosphate phosphodiesterase beta-4 (1175 aa).

Residue alanine 2 is modified to N-acetylalanine. In terms of domain architecture, PI-PLC X-box spans 313–463; the sequence is QEMDHPLAHY…LKRKILIKNK (151 aa). Active-site residues include histidine 328 and histidine 375. The tract at residues 482–511 is disordered; the sequence is EAGESASPANILEDDNEEEIESADQEEEAH. Acidic residues predominate over residues 493–508; it reads LEDDNEEEIESADQEE. The region spanning 565–681 is the PI-PLC Y-box domain; sequence LSTMINYAQP…GYLLKPDFMR (117 aa). The C2 domain maps to 684–809; it reads DRTFDPFSET…SLRNEGNKPL (126 aa). 2 disordered regions span residues 863 to 895 and 1082 to 1110; these read ADVP…ELRP and KISM…VREL. Composition is skewed to polar residues over residues 881–895 and 1085–1094; these read AKAN…ELRP and MENSKAISQD. Threonine 886 bears the Phosphothreonine mark. A compositionally biased stretch (basic and acidic residues) spans 1095 to 1109; that stretch reads KSIKNKAERERRVRE.

Ca(2+) serves as cofactor. As to expression, preferentially expressed in the retina.

The protein localises to the cell membrane. It catalyses the reaction a 1,2-diacyl-sn-glycero-3-phospho-(1D-myo-inositol-4,5-bisphosphate) + H2O = 1D-myo-inositol 1,4,5-trisphosphate + a 1,2-diacyl-sn-glycerol + H(+). It carries out the reaction a 1,2-diacyl-sn-glycero-3-phospho-(1D-myo-inositol) + H2O = 1D-myo-inositol 1-phosphate + a 1,2-diacyl-sn-glycerol + H(+). Its function is as follows. Activated phosphatidylinositol-specific phospholipase C enzymes catalyze the production of the second messenger molecules diacylglycerol (DAG) and inositol 1,4,5-trisphosphate (IP3) involved in G-protein coupled receptor signaling pathways. PLCB4 is a direct effector of the endothelin receptor signaling pathway that plays an essential role in lower jaw and middle ear structures development. The chain is 1-phosphatidylinositol 4,5-bisphosphate phosphodiesterase beta-4 from Homo sapiens (Human).